The following is a 455-amino-acid chain: Retinoic acid receptor beta (455 aa).

The segment at 1–87 is modulating; that stretch reads MTTSGHACPV…PLPPPRVYKP (87 aa). The disordered stretch occupies residues 47–78; it reads HPPPSGCSTPSPATIETQSTSSEELVPSPPSP. Residues 53–66 show a composition bias toward polar residues; that stretch reads CSTPSPATIETQST. Residue Ser-77 is modified to Phosphoserine. 2 NR C4-type zinc fingers span residues 88–108 and 124–148; these read CFVC…CEGC and CHRD…LQKC. The segment at residues 88–153 is a DNA-binding region (nuclear receptor); it reads CFVCQDKSSG…RLQKCFEVGM (66 aa). Residues 154–182 are hinge; sequence SKESVRNDRNKKKKETSKQECTESYEMTA. Residues 183 to 417 enclose the NR LBD domain; sequence ELDDLTEKIR…PLIQEMLENS (235 aa). The tract at residues 415-455 is disordered; that stretch reads ENSEGHEPLTPSSSGNTAEHSPSISPSSVENSGVSQSPLVQ. The segment covering 424 to 434 has biased composition (polar residues); that stretch reads TPSSSGNTAEH. The segment covering 435–455 has biased composition (low complexity); it reads SPSISPSSVENSGVSQSPLVQ.

It belongs to the nuclear hormone receptor family. NR1 subfamily. Homodimer. Heterodimer; with a RXR molecule. Binds DNA preferentially as a RAR/RXR heterodimer. Heterodimerizes (via NR LBD) with RXRA. Interacts weakly with NCOR2. In terms of tissue distribution, expressed in aortic endothelial cells (at protein level).

The protein localises to the nucleus. The protein resides in the cytoplasm. Functionally, receptor for retinoic acid. Retinoic acid receptors bind as heterodimers to their target response elements in response to their ligands, all-trans or 9-cis retinoic acid, and regulate gene expression in various biological processes. The RXR/RAR heterodimers bind to the retinoic acid response elements (RARE) composed of tandem 5'-AGGTCA-3' sites known as DR1-DR5. In the absence or presence of hormone ligand, acts mainly as an activator of gene expression due to weak binding to corepressors. The RXRA/RARB heterodimer can act as a repressor on the DR1 element and as an activator on the DR5 element. In concert with RARG, required for skeletal growth, matrix homeostasis and growth plate function. The sequence is that of Retinoic acid receptor beta (RARB) from Homo sapiens (Human).